Reading from the N-terminus, the 825-residue chain is Phenylalanine--tRNA ligase beta subunit (825 aa).

Residues 39–154 (RSWAEGVVLG…KAHPLGSDAR (116 aa)) enclose the tRNA-binding domain. A B5 domain is found at 411–506 (PLERTLKLRL…RLYGYDRFSE (96 aa)). Residues Asp484, Asp490, Glu493, and Glu494 each contribute to the Mg(2+) site. An FDX-ACB domain is found at 731 to 824 (SPFPASDRDI…LEKHFPVTLR (94 aa)).

Belongs to the phenylalanyl-tRNA synthetase beta subunit family. Type 1 subfamily. As to quaternary structure, tetramer of two alpha and two beta subunits. Mg(2+) is required as a cofactor.

The protein localises to the cytoplasm. The enzyme catalyses tRNA(Phe) + L-phenylalanine + ATP = L-phenylalanyl-tRNA(Phe) + AMP + diphosphate + H(+). This chain is Phenylalanine--tRNA ligase beta subunit, found in Synechococcus sp. (strain JA-3-3Ab) (Cyanobacteria bacterium Yellowstone A-Prime).